The primary structure comprises 692 residues: Vitamin B12-dependent ribonucleoside-diphosphate reductase (692 aa).

The ATP-cone domain occupies 7-95; sequence AKVRRRDGTL…IYRQRRAELR (89 aa). Residues S177, 192-193, G221, 375-379, and 520-524 contribute to the substrate site; these read GC, NPCGE, and PTGTI. C193 and C388 are disulfide-bonded. N375 acts as the Proton acceptor in catalysis. The active-site Cysteine radical intermediate is the C377. Residue E379 is the Proton acceptor of the active site.

The protein belongs to the ribonucleoside diphosphate reductase class-2 family. Requires adenosylcob(III)alamin as cofactor.

It catalyses the reaction a 2'-deoxyribonucleoside 5'-diphosphate + [thioredoxin]-disulfide + H2O = a ribonucleoside 5'-diphosphate + [thioredoxin]-dithiol. In terms of biological role, provides the precursors necessary for DNA synthesis. Catalyzes the biosynthesis of deoxyribonucleotides from the corresponding ribonucleotides. This chain is Vitamin B12-dependent ribonucleoside-diphosphate reductase (nrdZ), found in Mycobacterium tuberculosis (strain CDC 1551 / Oshkosh).